Consider the following 52-residue polypeptide: MCGKILLILFFIMTLSACQVNHIRDVKGGTVAPSSSSRLTGLKLSKRSKDPL.

A signal peptide spans 1–17 (MCGKILLILFFIMTLSA). C18 carries the N-palmitoyl cysteine lipid modification. C18 is lipidated: S-diacylglycerol cysteine.

It localises to the cell outer membrane. Lysis proteins are required for both colicin release and partial cell lysis. This is Lysis protein for colicin N (cnl) from Escherichia coli.